The primary structure comprises 323 residues: Arginase-1 (323 aa).

Residues 1 to 27 form a disordered region; it reads MSSKPKSLEIIGAPFSKGQPRGGVEKG. A Phosphoserine modification is found at Ser-7. N6-succinyllysine is present on Lys-17. Residues Ser-62 and Ser-72 each carry the phosphoserine modification. Residue Lys-75 is modified to N6-succinyllysine. Residues His-101, Asp-124, His-126, and Asp-128 each coordinate Mn(2+). Residues 126 to 130 and 137 to 139 contribute to the substrate site; these read HTDIN and SGN. Ser-163 carries the phosphoserine modification. Asp-183 is a substrate binding site. Ser-217 bears the Phosphoserine mark. Residues Asp-232 and Asp-234 each contribute to the Mn(2+) site. Residues Thr-246 and Glu-277 each contribute to the substrate site. Thr-281 carries the post-translational modification Phosphothreonine.

The protein belongs to the arginase family. As to quaternary structure, homotrimer. Interacts with CMTM6. It depends on Mn(2+) as a cofactor. As to expression, expressed in macrophages. Expressed in precursor and mature group 2 innate lymphoid cells (ILC2s). Expressed in lung tumor-associated myeloid cells. Expressed in lung tumor-infiltrating dendritic cells.

Its subcellular location is the cytoplasm. The protein resides in the cytoplasmic granule. The enzyme catalyses L-arginine + H2O = urea + L-ornithine. It functions in the pathway nitrogen metabolism; urea cycle; L-ornithine and urea from L-arginine: step 1/1. Its function is as follows. Key element of the urea cycle converting L-arginine to urea and L-ornithine, which is further metabolized into metabolites proline and polyamides that drive collagen synthesis and bioenergetic pathways critical for cell proliferation, respectively; the urea cycle takes place primarily in the liver and, to a lesser extent, in the kidneys. Functionally, functions in L-arginine homeostasis in nonhepatic tissues characterized by the competition between nitric oxide synthase (NOS) and arginase for the available intracellular substrate arginine. Arginine metabolism is a critical regulator of innate and adaptive immune responses. Involved in an antimicrobial effector pathway in polymorphonuclear granulocytes (PMN). Upon PMN cell death is liberated from the phagolysosome and depletes arginine in the microenvironment leading to suppressed T cell and natural killer (NK) cell proliferation and cytokine secretion. In group 2 innate lymphoid cells (ILC2s) promotes acute type 2 inflammation in the lung and is involved in optimal ILC2 proliferation but not survival. Plays a role in the immune response of alternatively activated or M2 macrophages in processes such as wound healing and tissue regeneration, immune defense against multicellular pathogens and parasites, and immune suppression and allergic inflammation; the regulatory outcome seems to be organ specific. In tumor-infiltrating dendritic cells (DCs) and myeloid-derived suppressor cells (MDSCs) plays a role in suppression of T cell-mediated antitumor immunity. The sequence is that of Arginase-1 (Arg1) from Mus musculus (Mouse).